Here is a 218-residue protein sequence, read N- to C-terminus: Carboxylesterase 2 (218 aa).

Active-site charge relay system residues include serine 114, aspartate 168, and histidine 199.

This sequence belongs to the AB hydrolase superfamily. AB hydrolase 2 family. Homodimer.

It catalyses the reaction a carboxylic ester + H2O = an alcohol + a carboxylate + H(+). Hydrolyzes carboxylic ester bonds with relatively broad substrate specificity. The sequence is that of Carboxylesterase 2 (estB) from Pseudomonas fluorescens.